A 97-amino-acid polypeptide reads, in one-letter code: uncharacterized protein (97 aa).

The first 21 residues, 1-21, serve as a signal peptide directing secretion; the sequence is MNKKFSISLLSTILAFLLVLG. Residue C22 is the site of N-palmitoyl cysteine attachment. Residue C22 is the site of S-diacylglycerol cysteine attachment.

It to B.burgdorferi BBD15.

The protein localises to the cell membrane. This is an uncharacterized protein from Borreliella burgdorferi (strain ATCC 35210 / DSM 4680 / CIP 102532 / B31) (Borrelia burgdorferi).